A 252-amino-acid polypeptide reads, in one-letter code: Flagellar L-ring protein (252 aa).

The N-terminal stretch at Met1–Gly25 is a signal peptide. Cys26 carries the N-palmitoyl cysteine lipid modification. The S-diacylglycerol cysteine moiety is linked to residue Cys26.

This sequence belongs to the FlgH family. As to quaternary structure, the basal body constitutes a major portion of the flagellar organelle and consists of four rings (L,P,S, and M) mounted on a central rod.

It is found in the cell outer membrane. The protein resides in the bacterial flagellum basal body. Assembles around the rod to form the L-ring and probably protects the motor/basal body from shearing forces during rotation. The chain is Flagellar L-ring protein from Rhodopseudomonas palustris (strain ATCC BAA-98 / CGA009).